The sequence spans 259 residues: Type III pantothenate kinase (259 aa).

ATP is bound at residue 6–13; it reads DCGNTNTV. 107–110 lines the substrate pocket; that stretch reads GPDR. The Proton acceptor role is filled by Asp-109. Residue Asp-129 participates in K(+) binding. Thr-132 contributes to the ATP binding site. Thr-184 lines the substrate pocket.

Belongs to the type III pantothenate kinase family. As to quaternary structure, homodimer. It depends on NH4(+) as a cofactor. K(+) serves as cofactor.

It localises to the cytoplasm. It catalyses the reaction (R)-pantothenate + ATP = (R)-4'-phosphopantothenate + ADP + H(+). The protein operates within cofactor biosynthesis; coenzyme A biosynthesis; CoA from (R)-pantothenate: step 1/5. Functionally, catalyzes the phosphorylation of pantothenate (Pan), the first step in CoA biosynthesis. The protein is Type III pantothenate kinase of Ruegeria pomeroyi (strain ATCC 700808 / DSM 15171 / DSS-3) (Silicibacter pomeroyi).